The following is a 344-amino-acid chain: DNA-directed RNA polymerase subunit alpha (344 aa).

Positions 1 to 238 (MKVIKTAPLI…KQLGVFGERP (238 aa)) are alpha N-terminal domain (alpha-NTD). An alpha C-terminal domain (alpha-CTD) region spans residues 253–344 (DAKDLSAKIE…EKLEDKGGND (92 aa)).

The protein belongs to the RNA polymerase alpha chain family. As to quaternary structure, homodimer. The RNAP catalytic core consists of 2 alpha, 1 beta, 1 beta' and 1 omega subunit. When a sigma factor is associated with the core the holoenzyme is formed, which can initiate transcription.

The enzyme catalyses RNA(n) + a ribonucleoside 5'-triphosphate = RNA(n+1) + diphosphate. DNA-dependent RNA polymerase catalyzes the transcription of DNA into RNA using the four ribonucleoside triphosphates as substrates. The protein is DNA-directed RNA polymerase subunit alpha of Helicobacter pylori (strain HPAG1).